Consider the following 242-residue polypeptide: MDEKELKLRKLLIEGASGFGVNLDDEQIDKFFAYKDVLKEWNQKMNLTAIEDDEEIILKHFIDSISICPIIKDKNLALIDVGTGAGFPGIPVKIVFPELKVKLLDSLEKRTKFLNEVIERLDLKDISTVHARAEEKGVDPDYREKYDISVARAVASLPVLLEYCLPFVKVGGCFIAMKGNSTEEVENSKKALEILGGKIEDILEFNLPFSDIKRNVIVIKKFRQTPTKYPRKSGKPSKNPLT.

S-adenosyl-L-methionine is bound by residues Gly-82, Phe-87, 133 to 134 (AE), and Arg-152.

Belongs to the methyltransferase superfamily. RNA methyltransferase RsmG family.

The protein resides in the cytoplasm. Functionally, specifically methylates the N7 position of a guanine in 16S rRNA. The sequence is that of Ribosomal RNA small subunit methyltransferase G from Acetivibrio thermocellus (strain ATCC 27405 / DSM 1237 / JCM 9322 / NBRC 103400 / NCIMB 10682 / NRRL B-4536 / VPI 7372) (Clostridium thermocellum).